Here is a 259-residue protein sequence, read N- to C-terminus: tRNA (guanine-N(7)-)-methyltransferase (259 aa).

S-adenosyl-L-methionine-binding positions include glycine 80, glutamate 103–leucine 104, asparagine 136–serine 137, and leucine 156. Aspartate 159 is a catalytic residue. Residue threonine 234–glutamate 236 coordinates S-adenosyl-L-methionine.

It belongs to the class I-like SAM-binding methyltransferase superfamily. TrmB family.

Its subcellular location is the nucleus. The catalysed reaction is guanosine(46) in tRNA + S-adenosyl-L-methionine = N(7)-methylguanosine(46) in tRNA + S-adenosyl-L-homocysteine. It functions in the pathway tRNA modification; N(7)-methylguanine-tRNA biosynthesis. Its function is as follows. Catalyzes the formation of N(7)-methylguanine at position 46 (m7G46) in tRNA. This Oryza sativa subsp. indica (Rice) protein is tRNA (guanine-N(7)-)-methyltransferase.